The sequence spans 121 residues: Nitrogen fixation nifHD region glnB-like protein 2 (121 aa).

This sequence belongs to the P(II) protein family.

Its function is as follows. Could be involved in the regulation of nitrogen fixation. This chain is Nitrogen fixation nifHD region glnB-like protein 2 (glnBII), found in Methanococcus maripaludis (Methanococcus deltae).